Consider the following 347-residue polypeptide: MANAYKQAGVDIEAGYEAVSRMKKHVQTTMRKEVLGGLGGFGGMFDLSKLPLEEPVLVSGTDGVGTKLMLAFMADKHDTIGIDAVAMCVNDIVVQGAEPLFFLDYIACGKADPSKIEHIVKGIAEGCRQAGCSLIGGETAEMPGMYSKEEYDLAGFTVGIVDKKKIITGHSLDEGHVLIGLASSGIHSNGYSLVRKVLLEDGQMSLDRIYGRLELPLGEELLKPTKIYVKPILELLKKYEVYGMAHITGGGFIENIPRMLPKGIGAEIDLGSWNIQPIFSLIQEVGKIEEKEMFNIFNMGIGMVVAVKEENAKAVVRLLEEQGEKAYIIGRTVKGSGVAFNGGIDHE.

Belongs to the AIR synthase family.

Its subcellular location is the cytoplasm. The enzyme catalyses 2-formamido-N(1)-(5-O-phospho-beta-D-ribosyl)acetamidine + ATP = 5-amino-1-(5-phospho-beta-D-ribosyl)imidazole + ADP + phosphate + H(+). Its pathway is purine metabolism; IMP biosynthesis via de novo pathway; 5-amino-1-(5-phospho-D-ribosyl)imidazole from N(2)-formyl-N(1)-(5-phospho-D-ribosyl)glycinamide: step 2/2. In Bacillus cytotoxicus (strain DSM 22905 / CIP 110041 / 391-98 / NVH 391-98), this protein is Phosphoribosylformylglycinamidine cyclo-ligase.